Consider the following 341-residue polypeptide: UPF0283 membrane protein HD_1769 (341 aa).

3 helical membrane-spanning segments follow: residues 57–77, 86–106, and 204–224; these read LLAV…QCLI, IDLA…GAII, and ENAI…MIAW.

The protein belongs to the UPF0283 family.

It is found in the cell inner membrane. This Haemophilus ducreyi (strain 35000HP / ATCC 700724) protein is UPF0283 membrane protein HD_1769.